We begin with the raw amino-acid sequence, 132 residues long: Small ribosomal subunit protein uS8 (132 aa).

Belongs to the universal ribosomal protein uS8 family. Part of the 30S ribosomal subunit. Contacts proteins S5 and S12.

In terms of biological role, one of the primary rRNA binding proteins, it binds directly to 16S rRNA central domain where it helps coordinate assembly of the platform of the 30S subunit. The chain is Small ribosomal subunit protein uS8 from Staphylococcus aureus (strain USA300).